The chain runs to 287 residues: 2-dehydro-3-deoxyphosphooctonate aldolase (287 aa).

It belongs to the KdsA family.

The protein resides in the cytoplasm. The catalysed reaction is D-arabinose 5-phosphate + phosphoenolpyruvate + H2O = 3-deoxy-alpha-D-manno-2-octulosonate-8-phosphate + phosphate. Its pathway is carbohydrate biosynthesis; 3-deoxy-D-manno-octulosonate biosynthesis; 3-deoxy-D-manno-octulosonate from D-ribulose 5-phosphate: step 2/3. It functions in the pathway bacterial outer membrane biogenesis; lipopolysaccharide biosynthesis. This is 2-dehydro-3-deoxyphosphooctonate aldolase from Nitrobacter winogradskyi (strain ATCC 25391 / DSM 10237 / CIP 104748 / NCIMB 11846 / Nb-255).